The chain runs to 904 residues: DNA mismatch repair protein MutS (904 aa).

654-661 (GPNMAGKS) contributes to the ATP binding site.

Belongs to the DNA mismatch repair MutS family.

This protein is involved in the repair of mismatches in DNA. It is possible that it carries out the mismatch recognition step. This protein has a weak ATPase activity. In Caulobacter sp. (strain K31), this protein is DNA mismatch repair protein MutS.